A 443-amino-acid polypeptide reads, in one-letter code: 2-hydroxyethylphosphonate dioxygenase (443 aa).

Residues 8–63 (LAHWMNARKYTAAQTADLAGLPLDDLRRLLGDEANEPDPAAATALAEALSVEPSQL) enclose the HTH cro/C1-type 1 domain. Lys-16 lines the substrate pocket. A DNA-binding region (H-T-H motif) is located at residues 19-38 (AAQTADLAGLPLDDLRRLLG). Substrate is bound by residues Tyr-98 and Asn-126. His-129 contacts Fe cation. Substrate is bound by residues Glu-176, His-182, and Ser-196. A Fe cation-binding site is contributed by His-182. Positions 234–290 (VLDLFLARRAHTRTSAAEAAGVPPADLEAALRSPASETGLTVLRTLGRALGFDYRVL) constitute an HTH cro/C1-type 2 domain. Residues 245 to 265 (TRTSAAEAAGVPPADLEAALR) constitute a DNA-binding region (H-T-H motif).

The protein belongs to the non-heme iron-dependent dioxygenase family. Homodimer. Requires Fe(2+) as cofactor.

The enzyme catalyses 2-hydroxyethylphosphonate + O2 = hydroxymethylphosphonate + formate + H(+). It functions in the pathway secondary metabolite biosynthesis; bialaphos biosynthesis. Its function is as follows. Non-heme-dependent dioxygenase that catalyzes the conversion of 2-hydroxyethylphosphonate (HEP) to hydroxymethylphosphonate (HMP) in the biosynthesis of phosphinothricin tripeptide (PTT), also known as bialaphos (BA), a natural-product antibiotic and potent herbicide. PTT contains the unusual amino acid phosphinothricin attached to 2 alanine residues. Synthetic phosphinothricin (glufosinate) is a key component of commercial herbicides. This Streptomyces viridochromogenes (strain DSM 40736 / JCM 4977 / BCRC 1201 / Tue 494) protein is 2-hydroxyethylphosphonate dioxygenase (hepD).